Here is a 179-residue protein sequence, read N- to C-terminus: Iron sulfur cluster assembly protein 1, mitochondrial (179 aa).

The interval 160 to 179 (RSVKQPTLGPEAAQAETIAT) is disordered.

Belongs to the NifU family. In terms of assembly, component of the core Fe-S cluster (ISC) assembly machinery. [2Fe-2S] cluster is required as a cofactor.

It localises to the mitochondrion matrix. Its pathway is cofactor biosynthesis; iron-sulfur cluster biosynthesis. Functionally, scaffold protein for the de novo synthesis of iron-sulfur (Fe-S) clusters within mitochondria, which is required for maturation of both mitochondrial and cytoplasmic [2Fe-2S] and [4Fe-4S] proteins. First, a [2Fe-2S] cluster is transiently assembled on the scaffold protein ISU1. In a second step, the cluster is released from ISU1, transferred to a glutaredoxin, followed by the formation of mitochondrial [2Fe-2S] proteins, the synthesis of [4Fe-4S] clusters and their target-specific insertion into the recipient apoproteins. Cluster assembly on ISU1 depends on the function of the cysteine desulfurase complex NFS1-ISD11, which serves as the sulfur donor for cluster synthesis, the iron-binding protein frataxin as the putative iron donor, and the electron transfer chain comprised of ferredoxin reductase and ferredoxin, which receive their electrons from NADH. In Debaryomyces hansenii (strain ATCC 36239 / CBS 767 / BCRC 21394 / JCM 1990 / NBRC 0083 / IGC 2968) (Yeast), this protein is Iron sulfur cluster assembly protein 1, mitochondrial (ISU1).